The chain runs to 884 residues: E3 SUMO-protein ligase SIZ1 (884 aa).

The 35-residue stretch at L11 to L45 folds into the SAP domain. The tract at residues L84–P103 is disordered. Over residues G88–L97 the composition is skewed to polar residues. A Glycyl lysine isopeptide (Lys-Gly) (interchain with G-Cter in SUMO) cross-link involves residue K100. A PHD-type zinc finger spans residues K112–T168. The SP-RING-type zinc-finger motif lies at S346–H429. Positions 379, 381, 402, and 405 each coordinate Zn(2+). K488 is covalently cross-linked (Glycyl lysine isopeptide (Lys-Gly) (interchain with G-Cter in SUMO)). Disordered regions lie at residues P753–S778, G792–T824, and D836–H869. Composition is skewed to polar residues over residues S766–S778 and A803–T824. The segment covering S837–S847 has biased composition (basic and acidic residues).

Belongs to the PIAS family. As to quaternary structure, interacts (via PHD domain) with SCE1, GTE3 and GTE5. In terms of processing, autosumoylated at Lys-100 and Lys-488. As to expression, ubiquitous.

Its subcellular location is the nucleus speckle. It participates in protein modification; protein sumoylation. E3 SUMO protein ligase involved in regulation processes. Mediates SUMO/ attachment to PHR1, a MYB transcriptional activator controlling the phosphate deficiency responses. Functions as an upstream negative regulator of salicylic acid (SA) accumulation and subsequent SA-mediated systemic acquired resistance (SAR) signaling. Probably not involved in jasmonic acid (JA)-mediated defense response. Participates in abiotic stress-induced sumoylation. Controls heat shock-induced SUMO1 and SUMO2 conjugation and facilitates basal thermotolerance. Involved in freezing tolerance by mediating sumoylation of ICE1, a transcription activator of the cold signaling regulator CBF3/DREB1A. Acts as a positive regulator of drought stress tolerance. Acts as a floral repressor that promotes FLC expression by repressing FLD activity through sumoylation. Acts as a negative regulator of abscisic acid (ABA) signaling through ABI5 sumoylation. Mediates sumoylation of SCE1, GTE3 and GTE5. Functions as a negative regulator of SnRK1 signaling through sumoylation of several components of the SnRK1 complex. This chain is E3 SUMO-protein ligase SIZ1, found in Arabidopsis thaliana (Mouse-ear cress).